A 462-amino-acid chain; its full sequence is Probable protein phosphatase 2C 1 (462 aa).

One can recognise a PPM-type phosphatase domain in the interval S60 to L362. 4 residues coordinate Mn(2+): D95, G96, D307, and D353. Disordered stretches follow at residues E369–E394 and E421–V443. Residues Q376–V385 are compositionally biased toward polar residues. A compositionally biased stretch (basic and acidic residues) spans N424 to E434.

This sequence belongs to the PP2C family. As to quaternary structure, interacts with GCN5. Requires Mg(2+) as cofactor. The cofactor is Mn(2+).

It catalyses the reaction O-phospho-L-seryl-[protein] + H2O = L-seryl-[protein] + phosphate. It carries out the reaction O-phospho-L-threonyl-[protein] + H2O = L-threonyl-[protein] + phosphate. Functionally, may act as negative regulator of GCN5. The sequence is that of Probable protein phosphatase 2C 1 (PPC6-6) from Arabidopsis thaliana (Mouse-ear cress).